The following is a 618-amino-acid chain: V-type proton ATPase catalytic subunit A (618 aa).

251-258 (GAFGCGKT) lines the ATP pocket.

The protein belongs to the ATPase alpha/beta chains family. As to quaternary structure, V-ATPase is a heteromultimeric enzyme composed of a peripheral catalytic V1 complex (main components: subunits A, B, C, D, E, and F) attached to an integral membrane V0 proton pore complex (main component: the proteolipid protein).

It carries out the reaction ATP + H2O + 4 H(+)(in) = ADP + phosphate + 5 H(+)(out). Its function is as follows. Catalytic subunit of the peripheral V1 complex of vacuolar ATPase. V-ATPase vacuolar ATPase is responsible for acidifying a variety of intracellular compartments in eukaryotic cells. In Dictyostelium discoideum (Social amoeba), this protein is V-type proton ATPase catalytic subunit A (vatA).